The chain runs to 426 residues: Serine--tRNA ligase (426 aa).

Residue 231–233 coordinates L-serine; it reads TAE. 262 to 264 is a binding site for ATP; it reads RSE. L-serine is bound at residue Glu285. 349–352 is an ATP binding site; the sequence is EISS. Ser385 is an L-serine binding site.

Belongs to the class-II aminoacyl-tRNA synthetase family. Type-1 seryl-tRNA synthetase subfamily. As to quaternary structure, homodimer. The tRNA molecule binds across the dimer.

The protein resides in the cytoplasm. The enzyme catalyses tRNA(Ser) + L-serine + ATP = L-seryl-tRNA(Ser) + AMP + diphosphate + H(+). It catalyses the reaction tRNA(Sec) + L-serine + ATP = L-seryl-tRNA(Sec) + AMP + diphosphate + H(+). It functions in the pathway aminoacyl-tRNA biosynthesis; selenocysteinyl-tRNA(Sec) biosynthesis; L-seryl-tRNA(Sec) from L-serine and tRNA(Sec): step 1/1. Its function is as follows. Catalyzes the attachment of serine to tRNA(Ser). Is also able to aminoacylate tRNA(Sec) with serine, to form the misacylated tRNA L-seryl-tRNA(Sec), which will be further converted into selenocysteinyl-tRNA(Sec). The chain is Serine--tRNA ligase from Lysinibacillus sphaericus (strain C3-41).